A 267-amino-acid polypeptide reads, in one-letter code: tRNA pseudouridine synthase A (267 aa).

The active-site Nucleophile is the aspartate 55. Tyrosine 111 lines the substrate pocket.

Belongs to the tRNA pseudouridine synthase TruA family.

It catalyses the reaction uridine(38/39/40) in tRNA = pseudouridine(38/39/40) in tRNA. Formation of pseudouridine at positions 38, 39 and 40 in the anticodon stem and loop of transfer RNAs. This chain is tRNA pseudouridine synthase A, found in Thermococcus gammatolerans (strain DSM 15229 / JCM 11827 / EJ3).